The following is a 465-amino-acid chain: Alpha-2A adrenergic receptor (465 aa).

The Extracellular portion of the chain corresponds to 1–48 (MFRQEQPLAEGSFAPMGSLQPDAGNSSWNGTEAPGGGTRATPYSLQVT). N-linked (GlcNAc...) asparagine glycans are attached at residues Asn25 and Asn29. A helical membrane pass occupies residues 49–74 (LTLVCLAGLLMLFTVFGNVLVIIAVF). At 75–85 (TSRALKAPQNL) the chain is on the cytoplasmic side. A helical membrane pass occupies residues 86–111 (FLVSLASADILVATLVIPFSLANEVM). Topologically, residues 112-121 (GYWYFGKVWC) are extracellular. A disulfide bridge connects residues Cys121 and Cys203. The helical transmembrane segment at 122–144 (EIYLALDVLFCTSSIVHLCAISL) threads the bilayer. The Cytoplasmic portion of the chain corresponds to 145 to 164 (DRYWSITQAIEYNLKRTPRR). The helical transmembrane segment at 165–188 (IKAIIVTVWVISAVISFPPLISIE) threads the bilayer. At 189 to 207 (KKGAGGGQQPAEPSCKIND) the chain is on the extracellular side. Residues 208–232 (QKWYVISSSIGSFFAPCLIMILVYV) traverse the membrane as a helical segment. At 233–389 (RIYQIAKRRT…RQNREKRFTF (157 aa)) the chain is on the cytoplasmic side. The interval 242 to 378 (TRVPPSRRGP…GGGAKASRWR (137 aa)) is disordered. A compositionally biased stretch (basic and acidic residues) spans 313–330 (SSEHAERPPGPRRPDRGP). Ser346 carries the post-translational modification Phosphoserine. The segment covering 353–363 (GAAGPGASGSG) has biased composition (gly residues). Arg368 is subject to Omega-N-methylarginine. Residues 390 to 414 (VLAVVIGVFVVCWFPFFFTYTLIAV) traverse the membrane as a helical segment. Over 415–424 (GCPVPSQLFN) the chain is Extracellular. A helical membrane pass occupies residues 425–445 (FFFWFGYCNSSLNPVIYTIFN). Topologically, residues 446–465 (HDFRRAFKKILCRGDRKRIV) are cytoplasmic. A lipid anchor (S-palmitoyl cysteine) is attached at Cys457.

Belongs to the G-protein coupled receptor 1 family. Adrenergic receptor subfamily. ADRA2A sub-subfamily.

The protein resides in the cell membrane. Functionally, alpha-2 adrenergic receptors mediate the catecholamine-induced inhibition of adenylate cyclase through the action of G proteins. The sequence is that of Alpha-2A adrenergic receptor from Mus musculus (Mouse).